The following is a 330-amino-acid chain: Ketol-acid reductoisomerase (NADP(+)) (330 aa).

Positions 1–181 (MKVFYDSDFK…GLSRAGVIQT (181 aa)) constitute a KARI N-terminal Rossmann domain. NADP(+)-binding positions include 24-27 (YGSQ), Arg-47, Ser-52, and 82-85 (DELQ). His-107 is a catalytic residue. Gly-133 is an NADP(+) binding site. In terms of domain architecture, KARI C-terminal knotted spans 182–327 (TFKEETETDL…AKLRKMCGLE (146 aa)). Mg(2+)-binding residues include Asp-190, Glu-194, Glu-226, and Glu-230. Residue Ser-251 participates in substrate binding.

This sequence belongs to the ketol-acid reductoisomerase family. Mg(2+) serves as cofactor.

The enzyme catalyses (2R)-2,3-dihydroxy-3-methylbutanoate + NADP(+) = (2S)-2-acetolactate + NADPH + H(+). It catalyses the reaction (2R,3R)-2,3-dihydroxy-3-methylpentanoate + NADP(+) = (S)-2-ethyl-2-hydroxy-3-oxobutanoate + NADPH + H(+). It participates in amino-acid biosynthesis; L-isoleucine biosynthesis; L-isoleucine from 2-oxobutanoate: step 2/4. The protein operates within amino-acid biosynthesis; L-valine biosynthesis; L-valine from pyruvate: step 2/4. Its function is as follows. Involved in the biosynthesis of branched-chain amino acids (BCAA). Catalyzes an alkyl-migration followed by a ketol-acid reduction of (S)-2-acetolactate (S2AL) to yield (R)-2,3-dihydroxy-isovalerate. In the isomerase reaction, S2AL is rearranged via a Mg-dependent methyl migration to produce 3-hydroxy-3-methyl-2-ketobutyrate (HMKB). In the reductase reaction, this 2-ketoacid undergoes a metal-dependent reduction by NADPH to yield (R)-2,3-dihydroxy-isovalerate. The protein is Ketol-acid reductoisomerase (NADP(+)) of Methanococcus maripaludis (strain C6 / ATCC BAA-1332).